The following is a 787-amino-acid chain: Signal transducer and activator of transcription 5B (787 aa).

Y90 carries the phosphotyrosine modification. At S128 the chain carries Phosphoserine. In terms of domain architecture, SH2 spans 589 to 686; the sequence is WNDGAILGFV…EVYSKYYTPV (98 aa). Y682 bears the Phosphotyrosine mark. Y699 is modified (phosphotyrosine; by HCK, JAK and PTK6).

Belongs to the transcription factor STAT family. In terms of assembly, upon activation, forms a homodimer or a heterodimer with a related family member. Binds NR3C1. Interacts with NCOA1. Interacts with NMI. Interacts with SOCS7. Interacts (via SH2 domain) with INSR. Interacts with CPEB3; this inhibits STAT5B-mediated transcriptional activation. Tyrosine phosphorylated in response to signaling via activated KIT, resulting in translocation to the nucleus. Tyrosine phosphorylated in response to signaling via activated FLT3; wild-type FLT3 results in much weaker phosphorylation than constitutively activated mutant FLT3. Alternatively, can be phosphorylated by JAK2. Phosphorylation at Tyr-699 by PTK6 or HCK leads to an increase of its transcriptional activity.

The protein resides in the cytoplasm. Its subcellular location is the nucleus. Its function is as follows. Carries out a dual function: signal transduction and activation of transcription. Mediates cellular responses to the cytokine KITLG/SCF and other growth factors. Binds to the GAS element and activates PRL-induced transcription. Positively regulates hematopoietic/erythroid differentiation. This chain is Signal transducer and activator of transcription 5B (STAT5B), found in Sus scrofa (Pig).